The following is a 734-amino-acid chain: MALRFPRFSQGLAQDPTTRRIWFGIATAHDFESHDDITEERLYQNIFASHFGQLAIIFLWTSGNLFHVAWQGNFETWVQDPLHVRPIAHAIWDPHFGQPAVEAFTRGGALGPVNIAYSGVYQWWYTIGLRTNEDLYTGALFLLFLSALSLIGGWLHLQPKWKPRVSWFKNAESRLNHHLSGLFGVSSLAWTGHLVHVAIPASRGEYVRWNNFLNVLPHPQGLGPLFTGQWNLYAQNPDSSSHLFGTSQGSGTAILTLLGGFHPQTQSLWLTDMAHHHLAIAILFLIAGHMYRTNFGIGHSIKDLLEAHIPPGGRLGRGHKGLYDTINNSIHFQLGLALASLGVITSLVAQHMYSLPAYAFIAQDFTTQAALYTHHQYIAGFIMTGAFAHGAIFFIRDYNPEQNEDNVLARMLDHKEAIISHLSWASLFLGFHTLGLYVHNDVMLAFGTPEKQILIEPIFAQWIQSAHGKTSYGFDVLLSSTSGPAFNAGRSIWLPGWLNAINENSNSLFLTIGPGDFLVHHAIALGLHTTTLILVKGALDARGSKLMPDKKDFGYSFPCDGPGRGGTCDISAWDAFYLAVFWMLNTIGWVTFYWHWKHITLWQGNVSQFNESSTYLMGWLRDYLWLNSSQLINGYNPFGMNSLSVWAWMFLFGHLVWATGFMFLISWRGYWQELIETLAWAHERTPLANLIRWKDKPVALSIVQARLVGLAHFSVGYIFTYAAFLIASTSGKFG.

The next 8 membrane-spanning stretches (helical) occupy residues 46-69 (IFAS…FHVA), 135-158 (LYTG…LHLQ), 175-199 (LNHH…HVAI), 273-291 (MAHH…GHMY), 330-353 (IHFQ…QHMY), 369-395 (AALY…IFFI), 417-439 (AIIS…LYVH), and 517-535 (FLVH…LILV). [4Fe-4S] cluster is bound by residues Cys-559 and Cys-568. Helical transmembrane passes span 575–596 (AFYL…YWHW) and 643–665 (LSVW…MFLI). Chlorophyll a is bound by residues His-654, Met-662, and Tyr-670. Trp-671 provides a ligand contact to phylloquinone. The helical transmembrane segment at 707–727 (LVGLAHFSVGYIFTYAAFLIA) threads the bilayer.

This sequence belongs to the PsaA/PsaB family. The PsaA/B heterodimer binds the P700 chlorophyll special pair and subsequent electron acceptors. PSI consists of a core antenna complex that captures photons, and an electron transfer chain that converts photonic excitation into a charge separation. The eukaryotic PSI reaction center is composed of at least 11 subunits. P700 is a chlorophyll a/chlorophyll a' dimer, A0 is one or more chlorophyll a, A1 is one or both phylloquinones and FX is a shared 4Fe-4S iron-sulfur center. is required as a cofactor.

The protein localises to the plastid. It is found in the chloroplast thylakoid membrane. It carries out the reaction reduced [plastocyanin] + hnu + oxidized [2Fe-2S]-[ferredoxin] = oxidized [plastocyanin] + reduced [2Fe-2S]-[ferredoxin]. PsaA and PsaB bind P700, the primary electron donor of photosystem I (PSI), as well as the electron acceptors A0, A1 and FX. PSI is a plastocyanin-ferredoxin oxidoreductase, converting photonic excitation into a charge separation, which transfers an electron from the donor P700 chlorophyll pair to the spectroscopically characterized acceptors A0, A1, FX, FA and FB in turn. Oxidized P700 is reduced on the lumenal side of the thylakoid membrane by plastocyanin. The sequence is that of Photosystem I P700 chlorophyll a apoprotein A2 from Arabidopsis thaliana (Mouse-ear cress).